An 86-amino-acid polypeptide reads, in one-letter code: MKPNIHPAYRTVVFHDTSANEYFKVGSTIKTEREIELEGVTYPYVTIEVSSKSHPYYTGKQKTFDNEGSAARFQKRFGNFIGAKRG.

Belongs to the bacterial ribosomal protein bL31 family. Type B subfamily. Part of the 50S ribosomal subunit.

The polypeptide is Large ribosomal subunit protein bL31B (Citrobacter koseri (strain ATCC BAA-895 / CDC 4225-83 / SGSC4696)).